A 181-amino-acid chain; its full sequence is Probable pyruvoyl-dependent arginine decarboxylase (181 aa).

S43 carries the pyruvic acid (Ser) modification.

The protein belongs to the PdaD family. It depends on pyruvate as a cofactor.

It catalyses the reaction L-arginine + H(+) = agmatine + CO2. The chain is Probable pyruvoyl-dependent arginine decarboxylase from Chlorobium phaeobacteroides (strain BS1).